A 704-amino-acid chain; its full sequence is Protein kinase C-like 1 (704 aa).

Phosphothreonine; by autocatalysis is present on residues threonine 89 and threonine 139. 2 Phorbol-ester/DAG-type zinc fingers span residues 165–215 (GHQF…IMQC) and 237–287 (PHRF…SNLC). The residue at position 324 (threonine 324) is a Phosphothreonine; by autocatalysis. The 260-residue stretch at 375-634 (FNLLKVLGKG…DGPIRQHCFF (260 aa)) folds into the Protein kinase domain. Residues 381–389 (LGKGSFGKV) and lysine 404 each bind ATP. The active-site Proton acceptor is the aspartate 499. In terms of domain architecture, AGC-kinase C-terminal spans 635–704 (RGVDWKRFEN…FSYTNPHFSK (70 aa)).

It belongs to the protein kinase superfamily. AGC Ser/Thr protein kinase family. PKC subfamily.

It carries out the reaction L-seryl-[protein] + ATP = O-phospho-L-seryl-[protein] + ADP + H(+). The catalysed reaction is L-threonyl-[protein] + ATP = O-phospho-L-threonyl-[protein] + ADP + H(+). Its function is as follows. Diacylglycerol (DAG)-dependent serine/threonine-protein kinase that phosphorylates a range of cellular proteins. Phosphorylates mlk-1, a component of the JNK pathway. Involved in axon regeneration after injury probably by activating the JNK pathway. Plays a role in resistance to fungal infection and in wound healing by promoting expression of antimicrobial peptide nlp-29 in the epidermis downstream of gpa-12 and plc-3 and upstream of tir-1-p38-like pathway. Probably by regulating neuronal transmission in ALA neurons, regulates the decrease in pharyngeal pumping during the quiescent state that precedes each larval molt, downstream of lin-3 and receptor let-23 and phospholipase plc-3. The chain is Protein kinase C-like 1 (tpa-1) from Caenorhabditis elegans.